The primary structure comprises 256 residues: Protein YIPF7 (256 aa).

The Cytoplasmic segment spans residues M1–D125. Composition is skewed to polar residues over residues I18 to Y31 and R38 to P48. The segment at I18–P48 is disordered. A helical transmembrane segment spans residues L126–V146. Position 147 (Q147) is a topological domain, extracellular. The helical transmembrane segment at F148–L168 threads the bilayer. Over M169–S172 the chain is Cytoplasmic. A helical transmembrane segment spans residues G173 to L193. The Extracellular segment spans residues S194–C196. The chain crosses the membrane as a helical span at residues A197–W217. Topologically, residues C218–Q235 are cytoplasmic. A helical transmembrane segment spans residues Q236–F256.

It belongs to the YIP1 family.

The protein resides in the endoplasmic reticulum membrane. It localises to the golgi apparatus. Its subcellular location is the cis-Golgi network membrane. The protein localises to the trans-Golgi network membrane. This chain is Protein YIPF7 (YIPF7), found in Homo sapiens (Human).